The sequence spans 500 residues: MSEVEHQELDLNGEMLARREKLAKLREQGNPFPNTFRRDAYAEKLHAQYDEVEGEALKEQDIQVKVAGRIMLKRVMGKASFFTIQDVSGQIQLYVARDNLAEGVYADKVSMWDLGDIVGVAGTLFKTKTGELTVRCSEVELLTKSLRPLPNKVQGLTDQETRYRQRYLDLISNEESRRTFMIRSKVVSGIRQFFLEKDFIEVETPMLQVIPGGAAAKPFITHHNALDVDMYLRIAPELYLKRLVVGGFERVFELNRNFRNEGVSVRHNPEFTMIEYYQAYADYHDLMDNTEELLRKLAIDILGTTTVPYGEYVFDFGKPFERITMHDAIVKYGNGITREDLDSFEKSVEIAKGLGIEIQKSWGLGSVVNAIFEEVAEHQLIQPTFLMAHPAEISPLARRNDENPEVTDRFELFIGGREIGNGFSELNDAEDQAERFDAQVAAKDAGDDEAMFKDEDFVVALEHGLPPTAGEGLGIDRLAMIFANAPSIRDVILFPAMRQK.

Mg(2+) contacts are provided by Glu-411 and Glu-418.

The protein belongs to the class-II aminoacyl-tRNA synthetase family. In terms of assembly, homodimer. Mg(2+) is required as a cofactor.

The protein resides in the cytoplasm. It catalyses the reaction tRNA(Lys) + L-lysine + ATP = L-lysyl-tRNA(Lys) + AMP + diphosphate. This chain is Lysine--tRNA ligase, found in Actinobacillus pleuropneumoniae serotype 5b (strain L20).